The sequence spans 108 residues: Nucleoid-associated protein GK0018 (108 aa).

A disordered region spans residues 1–32; that stretch reads MMRGGMGNMQKMLKQMQKMQKEMQKAQEELAE. Residues 9 to 18 show a composition bias toward low complexity; it reads MQKMLKQMQK. The span at 19 to 32 shows a compositional bias: basic and acidic residues; the sequence is MQKEMQKAQEELAE.

This sequence belongs to the YbaB/EbfC family. Homodimer.

It localises to the cytoplasm. The protein localises to the nucleoid. In terms of biological role, binds to DNA and alters its conformation. May be involved in regulation of gene expression, nucleoid organization and DNA protection. The polypeptide is Nucleoid-associated protein GK0018 (Geobacillus kaustophilus (strain HTA426)).